Reading from the N-terminus, the 794-residue chain is Zinc finger protein 148 (794 aa).

Lys6 is covalently cross-linked (Glycyl lysine isopeptide (Lys-Gly) (interchain with G-Cter in SUMO2)). A Phosphoserine modification is found at Ser51. Residues Lys88, Lys115, and Lys132 each participate in a glycyl lysine isopeptide (Lys-Gly) (interchain with G-Cter in SUMO2) cross-link. A C2H2-type 1 zinc finger spans residues 171–193 (HVCEHCNAAFRTNYHLQRHVFIH). Phosphothreonine is present on Thr194. 2 C2H2-type zinc fingers span residues 199 to 221 (FQCSQCDMRFIQKYLLQRHEKIH) and 227 to 249 (FRCDECGMRFIQKYHMERHKRTH). At Ser250 the chain carries Phosphoserine. The C2H2-type 4 zinc finger occupies 255–278 (YQCEYCLQYFSRTDRVLKHKRMCH). Lys291 is covalently cross-linked (Glycyl lysine isopeptide (Lys-Gly) (interchain with G-Cter in SUMO2)). A disordered region spans residues 298-336 (EEDSGFSTSPKDNSLPKKKRQKTEKKSSGMDKESALDKS). Residues Ser301 and Ser306 each carry the phosphoserine modification. Lys308 participates in a covalent cross-link: Glycyl lysine isopeptide (Lys-Gly) (interchain with G-Cter in SUMO2). The segment covering 321-336 (EKKSSGMDKESALDKS) has biased composition (basic and acidic residues). Lys356 participates in a covalent cross-link: Glycyl lysine isopeptide (Lys-Gly) (interchain with G-Cter in SUMO1); alternate. A Glycyl lysine isopeptide (Lys-Gly) (interchain with G-Cter in SUMO2); alternate cross-link involves residue Lys356. Lys402 is covalently cross-linked (Glycyl lysine isopeptide (Lys-Gly) (interchain with G-Cter in SUMO2)). A Phosphoserine modification is found at Ser412. Glycyl lysine isopeptide (Lys-Gly) (interchain with G-Cter in SUMO2) cross-links involve residues Lys421 and Lys424. Positions 574–588 (NSSEVPEVTPSENVG) are enriched in polar residues. Positions 574–596 (NSSEVPEVTPSENVGSSSQASSS) are disordered. An N6-acetyllysine modification is found at Lys607. Ser665 and Ser784 each carry phosphoserine.

The protein belongs to the krueppel C2H2-type zinc-finger protein family. In terms of assembly, interacts with HNRNPDL. Interacts with the 5FMC complex; the interaction requires association with CHTOP. Interacts with CAVIN1. Post-translationally, sumoylated with SUMO2. Desumoylated by SENP3, resulting in the stimulation of transcription of its target genes.

The protein resides in the nucleus. Functionally, involved in transcriptional regulation. Represses the transcription of a number of genes including gastrin, stromelysin and enolase. Binds to the G-rich box in the enhancer region of these genes. This is Zinc finger protein 148 (ZNF148) from Homo sapiens (Human).